A 344-amino-acid polypeptide reads, in one-letter code: Serpentine receptor class alpha-27 (344 aa).

The next 7 membrane-spanning stretches (helical) occupy residues 28-48 (SIWM…TFYL), 67-87 (QILL…FLEI), 128-148 (GLLS…TVYV), 157-177 (MLIT…YGGV), 203-223 (AIFW…LLNI), 252-272 (ICSV…ALAI), and 287-307 (INIQ…VLIY).

It belongs to the nematode receptor-like protein sra family.

It localises to the membrane. This chain is Serpentine receptor class alpha-27 (sra-27), found in Caenorhabditis elegans.